The primary structure comprises 373 residues: ATP phosphoribosyltransferase regulatory subunit (373 aa).

The protein belongs to the class-II aminoacyl-tRNA synthetase family. HisZ subfamily. As to quaternary structure, heteromultimer composed of HisG and HisZ subunits.

The protein resides in the cytoplasm. Its pathway is amino-acid biosynthesis; L-histidine biosynthesis; L-histidine from 5-phospho-alpha-D-ribose 1-diphosphate: step 1/9. Its function is as follows. Required for the first step of histidine biosynthesis. May allow the feedback regulation of ATP phosphoribosyltransferase activity by histidine. The protein is ATP phosphoribosyltransferase regulatory subunit of Chelativorans sp. (strain BNC1).